The chain runs to 430 residues: Gamma-glutamyl phosphate reductase (430 aa).

The protein belongs to the gamma-glutamyl phosphate reductase family.

The protein localises to the cytoplasm. It carries out the reaction L-glutamate 5-semialdehyde + phosphate + NADP(+) = L-glutamyl 5-phosphate + NADPH + H(+). The protein operates within amino-acid biosynthesis; L-proline biosynthesis; L-glutamate 5-semialdehyde from L-glutamate: step 2/2. In terms of biological role, catalyzes the NADPH-dependent reduction of L-glutamate 5-phosphate into L-glutamate 5-semialdehyde and phosphate. The product spontaneously undergoes cyclization to form 1-pyrroline-5-carboxylate. In Methylococcus capsulatus (strain ATCC 33009 / NCIMB 11132 / Bath), this protein is Gamma-glutamyl phosphate reductase.